Here is a 345-residue protein sequence, read N- to C-terminus: Anthranilate phosphoribosyltransferase (345 aa).

Residues 77 to 79 (TAG), 82 to 83 (GD), T87, 89 to 92 (NVST), 106 to 114 (KHGNRAVSG), and S118 contribute to the 5-phospho-alpha-D-ribose 1-diphosphate site. G79 is a binding site for anthranilate. S91 contributes to the Mg(2+) binding site. Residue N109 participates in anthranilate binding. Position 164 (R164) interacts with anthranilate. Residues D223 and E224 each coordinate Mg(2+).

The protein belongs to the anthranilate phosphoribosyltransferase family. As to quaternary structure, homodimer. It depends on Mg(2+) as a cofactor.

It carries out the reaction N-(5-phospho-beta-D-ribosyl)anthranilate + diphosphate = 5-phospho-alpha-D-ribose 1-diphosphate + anthranilate. It participates in amino-acid biosynthesis; L-tryptophan biosynthesis; L-tryptophan from chorismate: step 2/5. Its function is as follows. Catalyzes the transfer of the phosphoribosyl group of 5-phosphorylribose-1-pyrophosphate (PRPP) to anthranilate to yield N-(5'-phosphoribosyl)-anthranilate (PRA). This is Anthranilate phosphoribosyltransferase from Saccharolobus solfataricus (strain ATCC 35092 / DSM 1617 / JCM 11322 / P2) (Sulfolobus solfataricus).